Consider the following 894-residue polypeptide: Microsomal triglyceride transfer protein large subunit (894 aa).

The first 18 residues, 1–18, serve as a signal peptide directing secretion; sequence MILLAVLFLCFISSYSAS. The Vitellogenin domain maps to 28–659; sequence LNNDRLYKLT…IFQYIGKAGL (632 aa). Cysteine 174 and cysteine 194 are disulfide-bonded.

Heterodimer; heterodimerizes with the protein disulfide isomerase (P4HB/PDI). Interacts with APOB. Interacts with PRAP1. As to expression, liver and small intestine. Also found in ovary, testis and kidney.

It is found in the endoplasmic reticulum. Its subcellular location is the golgi apparatus. The enzyme catalyses a 1,2-diacyl-sn-glycero-3-phosphocholine(in) = a 1,2-diacyl-sn-glycero-3-phosphocholine(out). It carries out the reaction a 1,2-diacyl-sn-glycero-3-phosphoethanolamine(in) = a 1,2-diacyl-sn-glycero-3-phosphoethanolamine(out). It catalyses the reaction a cholesterol ester(in) = a cholesterol ester(out). The catalysed reaction is a triacyl-sn-glycerol(in) = a triacyl-sn-glycerol(out). Catalyzes the transport of triglyceride, cholesteryl ester, and phospholipid between phospholipid surfaces. Required for the assembly and secretion of plasma lipoproteins that contain apolipoprotein B. May be involved in regulating cholesteryl ester biosynthesis in cells that produce lipoproteins. In Homo sapiens (Human), this protein is Microsomal triglyceride transfer protein large subunit (MTTP).